We begin with the raw amino-acid sequence, 180 residues long: Adenine phosphoribosyltransferase (180 aa).

Ala-2 is modified (N-acetylalanine). Phosphoserine occurs at positions 4, 15, and 30. Tyr-60 carries the phosphotyrosine modification. Ser-66 is subject to Phosphoserine. Residue Lys-114 is modified to N6-acetyllysine. Thr-135 is subject to Phosphothreonine.

It belongs to the purine/pyrimidine phosphoribosyltransferase family. In terms of assembly, homodimer.

Its subcellular location is the cytoplasm. It catalyses the reaction AMP + diphosphate = 5-phospho-alpha-D-ribose 1-diphosphate + adenine. It functions in the pathway purine metabolism; AMP biosynthesis via salvage pathway; AMP from adenine: step 1/1. Its function is as follows. Catalyzes a salvage reaction resulting in the formation of AMP, that is energically less costly than de novo synthesis. The chain is Adenine phosphoribosyltransferase from Cricetulus griseus (Chinese hamster).